The following is a 102-amino-acid chain: Thioredoxin (102 aa).

The Thioredoxin domain maps to Met-1–Ala-102. Cys-28 and Cys-31 are disulfide-bonded.

It belongs to the thioredoxin family.

Participates in various redox reactions through the reversible oxidation of its active center dithiol to a disulfide and catalyzes dithiol-disulfide exchange reactions. This chain is Thioredoxin (trxA), found in Chlamydia pneumoniae (Chlamydophila pneumoniae).